Reading from the N-terminus, the 566-residue chain is Cyclin G (566 aa).

In terms of domain architecture, Cyclin N-terminal spans 285-368; sequence MWYELPSDVL…VIANKLGVQM (84 aa).

It belongs to the cyclin family. Cyclin G subfamily. As to quaternary structure, interacts with corto. Interacts with the cyclin-dependent kinases Cdk2 and Cdk4. Interacts with Brca2 and Rad9. Interacts with polycomb protein Asx. Interacts with protein phosphatase 2A subunit wdb.

It localises to the chromosome. Its function is as follows. Cyclin with roles in multiple processes including transcription, meiotic recombination repair, cell cycle regulation, and promotion of normal growth and metabolism. Binds to the promoter region of the homeobox gene Abd-B and is involved in maintaining Abd-B expression in the pupal epithelium. Involved in the transcriptional repression of the homeotic genes Scr and Ubx. Plays a role in meiotic recombination repair of DNA double-strand breaks which ensures efficient translation of grk and promotes grk activity in the oocyte, leading to oocyte dorso-ventral axis formation following secretion of grk from the oocyte and its binding to Egfr in the directly overlying follicle cells. Negatively regulates the binding of serine/threonine-protein kinase Akt1 to the protein phosphatase 2A subunit wdb, promoting normal growth and metabolism. Required for the formation of bilateral symmetry. Negatively regulates cell cycle progression by preventing G1 to S transition and retarding S-phase progression. The sequence is that of Cyclin G from Drosophila melanogaster (Fruit fly).